The chain runs to 369 residues: 3-dehydroquinate synthase (369 aa).

NAD(+)-binding positions include 72–77, 130–131, Lys-142, and Lys-151; these read SGEKEK and TT. Residues Glu-184, His-247, and His-264 each coordinate Zn(2+).

The protein belongs to the sugar phosphate cyclases superfamily. Dehydroquinate synthase family. Co(2+) is required as a cofactor. Zn(2+) serves as cofactor. It depends on NAD(+) as a cofactor.

Its subcellular location is the cytoplasm. The enzyme catalyses 7-phospho-2-dehydro-3-deoxy-D-arabino-heptonate = 3-dehydroquinate + phosphate. It participates in metabolic intermediate biosynthesis; chorismate biosynthesis; chorismate from D-erythrose 4-phosphate and phosphoenolpyruvate: step 2/7. In terms of biological role, catalyzes the conversion of 3-deoxy-D-arabino-heptulosonate 7-phosphate (DAHP) to dehydroquinate (DHQ). This chain is 3-dehydroquinate synthase, found in Bacillus cytotoxicus (strain DSM 22905 / CIP 110041 / 391-98 / NVH 391-98).